A 726-amino-acid polypeptide reads, in one-letter code: DNA ligase (726 aa).

Residues 34-38, 83-84, and Glu115 contribute to the NAD(+) site; these read DAEYD and SL. Catalysis depends on Lys117, which acts as the N6-AMP-lysine intermediate. 4 residues coordinate NAD(+): Arg138, Glu190, Lys306, and Lys330. Residues Cys424, Cys427, Cys442, and Cys448 each coordinate Zn(2+). The BRCT domain maps to 608–698; sequence SRGNALAGKT…RTADDQATPA (91 aa). A disordered region spans residues 690–726; the sequence is TADDQATPASDRRAATASVPPSDDAPGSPRQLDFDLT.

The protein belongs to the NAD-dependent DNA ligase family. LigA subfamily. Mg(2+) serves as cofactor. Mn(2+) is required as a cofactor.

The enzyme catalyses NAD(+) + (deoxyribonucleotide)n-3'-hydroxyl + 5'-phospho-(deoxyribonucleotide)m = (deoxyribonucleotide)n+m + AMP + beta-nicotinamide D-nucleotide.. DNA ligase that catalyzes the formation of phosphodiester linkages between 5'-phosphoryl and 3'-hydroxyl groups in double-stranded DNA using NAD as a coenzyme and as the energy source for the reaction. It is essential for DNA replication and repair of damaged DNA. The chain is DNA ligase from Roseiflexus sp. (strain RS-1).